The chain runs to 267 residues: 4-hydroxy-tetrahydrodipicolinate reductase (267 aa).

Residues 8–13 (GAAGRM) and Asp-34 each bind NAD(+). NADP(+) is bound at residue Arg-35. Residues 98–100 (GTT) and 122–125 (AANF) contribute to the NAD(+) site. The active-site Proton donor/acceptor is the His-155. His-156 contacts (S)-2,3,4,5-tetrahydrodipicolinate. Catalysis depends on Lys-159, which acts as the Proton donor. (S)-2,3,4,5-tetrahydrodipicolinate is bound at residue 165 to 166 (GT).

Belongs to the DapB family.

It is found in the cytoplasm. It catalyses the reaction (S)-2,3,4,5-tetrahydrodipicolinate + NAD(+) + H2O = (2S,4S)-4-hydroxy-2,3,4,5-tetrahydrodipicolinate + NADH + H(+). The catalysed reaction is (S)-2,3,4,5-tetrahydrodipicolinate + NADP(+) + H2O = (2S,4S)-4-hydroxy-2,3,4,5-tetrahydrodipicolinate + NADPH + H(+). Its pathway is amino-acid biosynthesis; L-lysine biosynthesis via DAP pathway; (S)-tetrahydrodipicolinate from L-aspartate: step 4/4. Its function is as follows. Catalyzes the conversion of 4-hydroxy-tetrahydrodipicolinate (HTPA) to tetrahydrodipicolinate. The protein is 4-hydroxy-tetrahydrodipicolinate reductase of Pseudomonas putida (strain ATCC 47054 / DSM 6125 / CFBP 8728 / NCIMB 11950 / KT2440).